Here is a 436-residue protein sequence, read N- to C-terminus: MANVVVIGAQWGDEGKGKITDLLSRSADVVVRYQGGVNAGHTIVVDDKVLKLHLIPSGILYRETICLIGSGTVVDPKILLKEIDMLIDNGIDISGLKISSTSHVTMPYHRLLDEAMEADRGSNKIGTTGRGIGPTYADKSQRNGIRIRDLLNEDRLRDVIEIPLKEKNGLLEKIYGIAPLNKDEIIEEYLDYGQRLSKHVVDCTRTIHAAAKNKKNILFEGAQGTLLDLDHGTYPYVTSSNPISGGACIGAGVGPTLIDRVIGVAKAYTTRVGEGPFPTELQGSINDQLCDRGSEFGTTTGRRRRCGWFDGIIGKYAVYVNGLDCLAVTKLDVLDELDEIQVCIAYELDGKEIDYFPTNSDDLKKCKPIFKKLKGWQCSTANCRKLSDLPENAMNYLRFLAELMEVPIAIVSLGANRDQTIVIEDPIHGPKRALLR.

Residues 12-18 (GDEGKGK) and 40-42 (GHT) each bind GTP. The active-site Proton acceptor is aspartate 13. Residues aspartate 13 and glycine 40 each coordinate Mg(2+). IMP is bound by residues 13–16 (DEGK), 38–41 (NAGH), threonine 128, arginine 142, glutamine 223, threonine 238, and arginine 302. The Proton donor role is filled by histidine 41. 298–304 (TTTGRRR) serves as a coordination point for substrate. GTP contacts are provided by residues arginine 304, 330–332 (KLD), and 412–414 (SLG).

This sequence belongs to the adenylosuccinate synthetase family. As to quaternary structure, homodimer. It depends on Mg(2+) as a cofactor.

It is found in the cytoplasm. It catalyses the reaction IMP + L-aspartate + GTP = N(6)-(1,2-dicarboxyethyl)-AMP + GDP + phosphate + 2 H(+). It participates in purine metabolism; AMP biosynthesis via de novo pathway; AMP from IMP: step 1/2. Its function is as follows. Plays an important role in the de novo pathway of purine nucleotide biosynthesis. Catalyzes the first committed step in the biosynthesis of AMP from IMP. This is Adenylosuccinate synthetase from Prochlorococcus marinus subsp. pastoris (strain CCMP1986 / NIES-2087 / MED4).